Here is a 512-residue protein sequence, read N- to C-terminus: Ribonuclease Y (512 aa).

Residues 3-23 form a helical membrane-spanning segment; the sequence is FQIILVVIISALVGLVIGFFI. A KH domain is found at 202–265; the sequence is TVAVIPLPND…EVARLALERL (64 aa). The HD domain occupies 328–421; it reads VLKHSIEVCH…VQAADAISAA (94 aa).

Belongs to the RNase Y family.

It localises to the cell membrane. Its function is as follows. Endoribonuclease that initiates mRNA decay. This chain is Ribonuclease Y, found in Desulforamulus reducens (strain ATCC BAA-1160 / DSM 100696 / MI-1) (Desulfotomaculum reducens).